The primary structure comprises 115 residues: Ig heavy chain V-III region J606 (115 aa).

The region spanning 1 to 114 (EVKLEESGGG…WGQGTLVTVS (114 aa)) is the Ig-like domain. The cysteines at positions 22 and 98 are disulfide-linked.

This is Ig heavy chain V-III region J606 from Mus musculus (Mouse).